A 462-amino-acid chain; its full sequence is Serine carboxypeptidase-like 28 (462 aa).

A signal peptide spans 1–26; that stretch reads MMITKKLYQCMCLLCMVIALLDVVSS. Asn-49 and Asn-144 each carry an N-linked (GlcNAc...) asparagine glycan. Disulfide bonds link Cys-93-Cys-342, Cys-254-Cys-266, and Cys-290-Cys-311. The active site involves Ser-186. Residue Asn-256 is glycosylated (N-linked (GlcNAc...) asparagine). A glycan (N-linked (GlcNAc...) asparagine) is linked at Asn-334. Catalysis depends on residues Asp-379 and His-434. The N-linked (GlcNAc...) asparagine glycan is linked to Asn-454.

Belongs to the peptidase S10 family. In terms of tissue distribution, expressed in seedlings, roots and senescent leaves.

Its subcellular location is the secreted. Functionally, probable carboxypeptidase. This chain is Serine carboxypeptidase-like 28 (SCPL28), found in Arabidopsis thaliana (Mouse-ear cress).